We begin with the raw amino-acid sequence, 1505 residues long: G patch domain-containing protein 8 (1505 aa).

The G-patch domain maps to 40-86; sequence SDNIGHRLLQKHGWKLGQGLGKSLQGRTDPIPIVVKYDVMGMGRMEM. Residues 89-124 adopt a coiled-coil conformation; it reads DYAEDATERRRVLEVEKEDTEELRQKYKDYVDKEKA. The C2H2-type zinc-finger motif lies at 136–160; it reads FYCELCDKQYQKHQEFDNHINSYDH. Basic and acidic residues-rich tracts occupy residues 166–175 and 182–206; these read LKDLKQREFA and SRKDEKKQEKALRRLHELAEQRKQA. Residues 166-244 are disordered; sequence LKDLKQREFA…SSTNSGASAV (79 aa). Acidic residues predominate over residues 223–233; that stretch reads VDEDGGEEDKD. A Glycyl lysine isopeptide (Lys-Gly) (interchain with G-Cter in SUMO2) cross-link involves residue K311. Composition is skewed to basic and acidic residues over residues 322 to 339 and 421 to 436; these read HAEEGSSEDGTKADEKSS and EGDHSAHSKSAPENRK. Disordered regions lie at residues 322-393 and 419-537; these read HAEE…EPEY and QMEG…FPVL. Positions 437-449 are enriched in polar residues; sequence SSSPKPQGCSKTA. Position 479 is an N6-acetyllysine (K479). K573 participates in a covalent cross-link: Glycyl lysine isopeptide (Lys-Gly) (interchain with G-Cter in SUMO2). Composition is skewed to basic and acidic residues over residues 575-612 and 648-665; these read SRNKDAKAKGTEKPKDVAGSSKDHLQSLDPREPNKSQE and SETEDTGRSHPSKKEPSG. Residues 575–1304 are disordered; that stretch reads SRNKDAKAKG…ESTDGTEDAS (730 aa). S648 is modified (phosphoserine). A compositionally biased stretch (basic residues) spans 666–687; sequence KSHRHKKKKKHKKSSKHKRKHK. A compositionally biased stretch (basic and acidic residues) spans 688-702; it reads ADTEEKSSKAESGEK. Basic residues predominate over residues 703–715; sequence SKKRKKRKRKKNK. Phosphoserine is present on residues S733, S735, and S753. Residues 745-767 are compositionally biased toward basic and acidic residues; sequence AQDDSQRRSLPAEEGNSGKKDDG. Residues 794–804 show a composition bias toward basic residues; that stretch reads ANTKHSSRSSH. The segment covering 832–849 has biased composition (acidic residues); it reads SEEEEEEEEEEEEEDEDS. Residues 856–871 show a composition bias toward basic residues; the sequence is SRSRSGHRHSSHRSSR. Residues 872 to 900 are compositionally biased toward low complexity; it reads RSYSSSSDASSDQSCYSRQHSYSDDSYSD. Phosphoserine is present on residues S915 and S918. The segment covering 923 to 932 has biased composition (basic residues); that stretch reads SKHRSKRHKY. Phosphoserine occurs at positions 985, 1013, 1018, 1037, and 1039. Over residues 1017-1031 the composition is skewed to basic and acidic residues; sequence ESPEERRSGRRDFIR. Basic and acidic residues predominate over residues 1050–1063; sequence GPGKKEDGRGDDSK. S1085 carries the post-translational modification Phosphoserine. Composition is skewed to basic and acidic residues over residues 1097-1112, 1163-1185, and 1211-1220; these read LLEKIQSRKVERKPNV, KKCEESGLERGEEQEHSEPEEGS, and EEPKSEEATA. Residue K1109 forms a Glycyl lysine isopeptide (Lys-Gly) (interchain with G-Cter in SUMO2) linkage. A Phosphoserine modification is found at S1179.

This chain is G patch domain-containing protein 8 (Gpatch8), found in Mus musculus (Mouse).